A 628-amino-acid chain; its full sequence is Biosynthetic arginine decarboxylase (628 aa).

The residue at position 99 (lysine 99) is an N6-(pyridoxal phosphate)lysine. 279-289 (VDVGGGLGIDY) provides a ligand contact to substrate.

The protein belongs to the Orn/Lys/Arg decarboxylase class-II family. SpeA subfamily. Requires Mg(2+) as cofactor. The cofactor is pyridoxal 5'-phosphate.

It catalyses the reaction L-arginine + H(+) = agmatine + CO2. Its function is as follows. Catalyzes the biosynthesis of agmatine from arginine. In Xylella fastidiosa (strain 9a5c), this protein is Biosynthetic arginine decarboxylase.